We begin with the raw amino-acid sequence, 87 residues long: Phosphoribosyl-ATP pyrophosphatase (87 aa).

Belongs to the PRA-PH family.

It localises to the cytoplasm. It carries out the reaction 1-(5-phospho-beta-D-ribosyl)-ATP + H2O = 1-(5-phospho-beta-D-ribosyl)-5'-AMP + diphosphate + H(+). It participates in amino-acid biosynthesis; L-histidine biosynthesis; L-histidine from 5-phospho-alpha-D-ribose 1-diphosphate: step 2/9. The chain is Phosphoribosyl-ATP pyrophosphatase from Arthrobacter sp. (strain FB24).